Reading from the N-terminus, the 478-residue chain is Catalase easC (478 aa).

Residue His-54 is part of the active site. A heme-binding site is contributed by Tyr-343. The interval 459 to 478 is disordered; that stretch reads VAEKARPDSPSRAQPGQLRL.

Belongs to the catalase family. Requires heme as cofactor.

It functions in the pathway alkaloid biosynthesis; ergot alkaloid biosynthesis. Its function is as follows. Catalase; part of the gene cluster that mediates the biosynthesis of fungal ergot alkaloid. DmaW catalyzes the first step of ergot alkaloid biosynthesis by condensing dimethylallyl diphosphate (DMAP) and tryptophan to form 4-dimethylallyl-L-tryptophan. The second step is catalyzed by the methyltransferase easF that methylates 4-dimethylallyl-L-tryptophan in the presence of S-adenosyl-L-methionine, resulting in the formation of 4-dimethylallyl-L-abrine. The catalase easC and the FAD-dependent oxidoreductase easE then transform 4-dimethylallyl-L-abrine to chanoclavine-I which is further oxidized by easD in the presence of NAD(+), resulting in the formation of chanoclavine-I aldehyde. Chanoclavine-I aldehyde is the precursor of ergoamides and ergopeptines in Clavicipitaceae, and clavine-type alcaloids such as fumiclavine in Trichocomaceae. However, the metabolites downstream of chanoclavine-I aldehyde in Arthrodermataceae have not been identified yet. This Trichophyton verrucosum (strain HKI 0517) protein is Catalase easC.